Consider the following 63-residue polypeptide: Large ribosomal subunit protein bL35 (63 aa).

Basic residues predominate over residues 1–43 (MKMRTHSGAKKRLKVLSSGKVKKKSTRMRHLNSHMSSKTKRQL). The disordered stretch occupies residues 1–45 (MKMRTHSGAKKRLKVLSSGKVKKKSTRMRHLNSHMSSKTKRQLGK).

It belongs to the bacterial ribosomal protein bL35 family.

In Bdellovibrio bacteriovorus (strain ATCC 15356 / DSM 50701 / NCIMB 9529 / HD100), this protein is Large ribosomal subunit protein bL35.